Here is a 165-residue protein sequence, read N- to C-terminus: Phosphopantetheine adenylyltransferase (165 aa).

T9 serves as a coordination point for substrate. ATP contacts are provided by residues 9–10 and H17; that span reads TF. The substrate site is built by K41, L78, and R92. Residues 93-95, E103, and 128-134 contribute to the ATP site; these read GLR and RQAIASK.

The protein belongs to the bacterial CoaD family. In terms of assembly, homohexamer. Mg(2+) serves as cofactor.

It localises to the cytoplasm. The enzyme catalyses (R)-4'-phosphopantetheine + ATP + H(+) = 3'-dephospho-CoA + diphosphate. It functions in the pathway cofactor biosynthesis; coenzyme A biosynthesis; CoA from (R)-pantothenate: step 4/5. Functionally, reversibly transfers an adenylyl group from ATP to 4'-phosphopantetheine, yielding dephospho-CoA (dPCoA) and pyrophosphate. This chain is Phosphopantetheine adenylyltransferase, found in Ruegeria pomeroyi (strain ATCC 700808 / DSM 15171 / DSS-3) (Silicibacter pomeroyi).